The following is a 276-amino-acid chain: Nickel import system permease protein NikC (276 aa).

The next 5 helical transmembrane spans lie at 10–30, 73–93, 108–128, 186–206, and 238–258; these read LIFF…FFVS, LFVT…LGLF, FIDV…ASFF, IIPA…LYIS, and IMLI…NLTG. Positions 69–258 constitute an ABC transmembrane type-1 domain; that stretch reads ARSTLFVTVL…ITILIFNLTG (190 aa).

This sequence belongs to the binding-protein-dependent transport system permease family. OppBC subfamily. The complex is composed of two ATP-binding proteins (NikD and NikE), two transmembrane proteins (NikB and NikC) and a solute-binding protein (NikA).

The protein resides in the cell membrane. In terms of biological role, part of the ABC transporter complex NikABCDE (Opp2) involved in nickel import. Probably responsible for the translocation of the substrate across the membrane. This is Nickel import system permease protein NikC from Staphylococcus aureus (strain USA300).